The sequence spans 908 residues: Flap endonuclease GEN homolog 1 (908 aa).

Positions 2–96 (GVNDLWQILE…SKRTQTRYGP (95 aa)) are XPG-N domain. The Mg(2+) site is built by Asp-30, Glu-75, Glu-134, Glu-136, Asp-155, Asp-157, and Asp-208. The segment at 122 to 208 (ECLGMPWVQA…VGLAVLLGCD (87 aa)) is XPG-I domain. Residues 208–383 (DYLPKGVPGV…LLVLLTRYDM (176 aa)) are 5'-3' exonuclease domain. Residues 389-463 (GRKTSNQLQP…VYQKQLSETK (75 aa)) are chromodomain. Disordered stretches follow at residues 460–482 (SETKGRKQKSMKNKPKGSHLPEA), 629–650 (YESEQGTSDSEGSGRDLQQSNP), 792–834 (RDSS…NKLR), and 853–886 (AEDEENGFSDLGRSPQSFRPCHDKDENSTASWEN). The segment covering 465-476 (RKQKSMKNKPKG) has biased composition (basic residues). Ser-794 and Ser-795 each carry phosphoserine. Residues 824–834 (HVRDSTHNKLR) are compositionally biased toward basic and acidic residues.

This sequence belongs to the XPG/RAD2 endonuclease family. GEN subfamily. In terms of assembly, largely monomeric, dimerizes on the Holliday junction and the first nick occurs upon dimerization at the junction. Mg(2+) serves as cofactor. As to expression, expressed in bone marrow and testis and to a lesser extent in thymus, spleen, brain and colon.

Its subcellular location is the nucleus. In terms of biological role, endonuclease which resolves Holliday junctions (HJs) by the introduction of symmetrically related cuts across the junction point, to produce nicked duplex products in which the nicks can be readily ligated. Four-way DNA intermediates, also known as Holliday junctions, are formed during homologous recombination and DNA repair, and their resolution is necessary for proper chromosome segregation. Cleaves HJs by a nick and counter-nick mechanism involving dual coordinated incisions that lead to the formation of ligatable nicked duplex products. Cleavage of the first strand is rate limiting, while second strand cleavage is rapid. Largely monomeric, dimerizes on the HJ and the first nick occurs upon dimerization at the junction. Efficiently cleaves both single and double HJs contained within large recombination intermediates. Exhibits a weak sequence preference for incision between two G residues that reside in a T-rich region of DNA. Also has endonuclease activity on 5'-flap and replication fork (RF) DNA substrates. The chain is Flap endonuclease GEN homolog 1 (Gen1) from Mus musculus (Mouse).